A 294-amino-acid polypeptide reads, in one-letter code: Acetyl-coenzyme A carboxylase carboxyl transferase subunit beta (294 aa).

Residues 30–294 (IMTKCPECKK…PEVGGEADGE (265 aa)) form the CoA carboxyltransferase N-terminal domain. 4 residues coordinate Zn(2+): cysteine 34, cysteine 37, cysteine 53, and cysteine 56. A C4-type zinc finger spans residues 34–56 (CPECKKIMYTKELQKNLMVCNYC).

Belongs to the AccD/PCCB family. Acetyl-CoA carboxylase is a heterohexamer composed of biotin carboxyl carrier protein (AccB), biotin carboxylase (AccC) and two subunits each of ACCase subunit alpha (AccA) and ACCase subunit beta (AccD). Zn(2+) serves as cofactor.

Its subcellular location is the cytoplasm. The enzyme catalyses N(6)-carboxybiotinyl-L-lysyl-[protein] + acetyl-CoA = N(6)-biotinyl-L-lysyl-[protein] + malonyl-CoA. The protein operates within lipid metabolism; malonyl-CoA biosynthesis; malonyl-CoA from acetyl-CoA: step 1/1. Its function is as follows. Component of the acetyl coenzyme A carboxylase (ACC) complex. Biotin carboxylase (BC) catalyzes the carboxylation of biotin on its carrier protein (BCCP) and then the CO(2) group is transferred by the transcarboxylase to acetyl-CoA to form malonyl-CoA. This Listeria monocytogenes serotype 4a (strain HCC23) protein is Acetyl-coenzyme A carboxylase carboxyl transferase subunit beta.